The sequence spans 148 residues: Large ribosomal subunit protein bL9 (148 aa).

Belongs to the bacterial ribosomal protein bL9 family.

Functionally, binds to the 23S rRNA. This chain is Large ribosomal subunit protein bL9, found in Solibacter usitatus (strain Ellin6076).